The primary structure comprises 377 residues: MTDSPVLALAKELISRQSVTPADAGCQDLMIERLKALGFEIESMVFEDTTNFWARRGTQSPLFVFAGHTDVVPAGPLSQWHTPPFEPTVIDGFLHGRGAADMKGSLACMIVAVERFIAEHPDHQGSIGFLITSDEEGPFINGTVRVVETLMARNELIDMCIVGEPSSTLAVGDVVKNGRRGSITGDLKVKGTQGHVAYPHLANNPVHKALPALAELAATQWDEGNAYFPPTSFQIPNLQAGTGASNVIPGEFDVQFNFRFSTELTDEEIKRRVHSVLDAHGLDYDVKWTLSGQPFLTDTGELLAAVVAAVEEVNHQAPALLTTGGTSDGRFIAQMGAQVVELGPVNATIHKVNECVRIADLEKLTDMYQKTLNHLLG.

Position 68 (H68) interacts with Zn(2+). D70 is a catalytic residue. D101 contacts Zn(2+). The active-site Proton acceptor is the E135. E136, E164, and H350 together coordinate Zn(2+).

This sequence belongs to the peptidase M20A family. DapE subfamily. As to quaternary structure, homodimer. Zn(2+) serves as cofactor.

It carries out the reaction N-succinyl-(2S,6S)-2,6-diaminopimelate + H2O = (2S,6S)-2,6-diaminopimelate + succinate. It functions in the pathway amino-acid biosynthesis; L-lysine biosynthesis via DAP pathway; LL-2,6-diaminopimelate from (S)-tetrahydrodipicolinate (succinylase route): step 3/3. Functionally, catalyzes the hydrolysis of N-succinyl-L,L-diaminopimelic acid (SDAP), forming succinate and LL-2,6-diaminopimelate (DAP), an intermediate involved in the bacterial biosynthesis of lysine and meso-diaminopimelic acid, an essential component of bacterial cell walls. In Vibrio cholerae serotype O1 (strain ATCC 39315 / El Tor Inaba N16961), this protein is Succinyl-diaminopimelate desuccinylase (dapE).